The primary structure comprises 136 residues: Putative pre-16S rRNA nuclease (136 aa).

It belongs to the YqgF nuclease family.

The protein localises to the cytoplasm. Could be a nuclease involved in processing of the 5'-end of pre-16S rRNA. In Francisella tularensis subsp. tularensis (strain WY96-3418), this protein is Putative pre-16S rRNA nuclease.